The sequence spans 598 residues: uncharacterized protein (598 aa).

Positions 1–19 (MSVPLRFSTPSSSPSASDN) are enriched in low complexity. 3 disordered regions span residues 1–54 (MSVP…MRPK), 139–176 (QKNQ…PNWK), and 194–279 (EAQL…ITMP). The Cytoplasmic portion of the chain corresponds to 1–313 (MSVPLRFSTP…CKIRHFFREG (313 aa)). A compositionally biased stretch (polar residues) spans 30 to 48 (ELDTFNTTDVPRRVNTTKA). Residues 147–165 (RANSRVNSRANSRANSSVS) are compositionally biased toward low complexity. Polar residues-rich tracts occupy residues 218-242 (FSLQ…SSAI) and 255-276 (PRNN…SQDI). Residues 314-334 (FAEFLGTLVLVVFGVGSNLQA) traverse the membrane as a helical segment. Topologically, residues 335–346 (TVTNGAGGSFES) are extracellular. The helical transmembrane segment at 347 to 367 (LSFAWGFGCMLGVYIAGGISG) threads the bilayer. Residues 368 to 388 (GHVNPAVTISLAIFRKFPWYK) are Cytoplasmic-facing. The NPA 1 signature appears at 371 to 373 (NPA). The helical transmembrane segment at 389–409 (VPIYIFFQIWGAFFGGALAYG) threads the bilayer. Over 410–444 (YHWSSITEFEGGKDIRTPATGGCLYTNPKPYVTWR) the chain is Extracellular. Residues 445–465 (NAFFDEFIGTAVLVGCLFAIL) form a helical membrane-spanning segment. Residues 466-473 (DDTNSPPT) lie on the Cytoplasmic side of the membrane. A helical membrane pass occupies residues 474 to 494 (QGMTAFIVGLLIAAIGMALGY). The Extracellular portion of the chain corresponds to 495-532 (QTSFTLNPARDLGPRMFAWWIGYGPHSFHLYHWWWTWG). Positions 501-503 (NPA) match the NPA 2 motif. Residues 533 to 553 (AWGGTIGGGIAGGLIYDLVIF) form a helical membrane-spanning segment. Over 554–598 (TGPESPLNYPDNGFIDKKVHQITAKFEKEEEVENLEKTDSPIENN) the chain is Cytoplasmic.

It belongs to the MIP/aquaporin (TC 1.A.8) family.

The protein resides in the membrane. This is an uncharacterized protein from Schizosaccharomyces pombe (strain 972 / ATCC 24843) (Fission yeast).